A 275-amino-acid polypeptide reads, in one-letter code: 4-diphosphocytidyl-2-C-methyl-D-erythritol kinase (275 aa).

Lys-14 is an active-site residue. 98–108 (PMGAGLGGGSS) provides a ligand contact to ATP. Asp-140 is an active-site residue.

It belongs to the GHMP kinase family. IspE subfamily.

The catalysed reaction is 4-CDP-2-C-methyl-D-erythritol + ATP = 4-CDP-2-C-methyl-D-erythritol 2-phosphate + ADP + H(+). Its pathway is isoprenoid biosynthesis; isopentenyl diphosphate biosynthesis via DXP pathway; isopentenyl diphosphate from 1-deoxy-D-xylulose 5-phosphate: step 3/6. Its function is as follows. Catalyzes the phosphorylation of the position 2 hydroxy group of 4-diphosphocytidyl-2C-methyl-D-erythritol. This is 4-diphosphocytidyl-2-C-methyl-D-erythritol kinase from Francisella philomiragia subsp. philomiragia (strain ATCC 25017 / CCUG 19701 / FSC 153 / O#319-036).